We begin with the raw amino-acid sequence, 272 residues long: MSEQNMSIAIDRHHRGMTLDSEQTAIVVKNWNLYYGSKQALHNITMKLPQNRVTAFIGPSGCGKSTLLRCFNRMNDLIDIVSVEGEMLLHGENMYAKEMDVAALRRRVGMVFQKPNPFPKSIYENVCYGLRLQGINDKNVLDETVEWALKGAGLWEEAKDRLDENALGLSGGQQQRLCIARAIAIKPEVLLLDEPTSALDPISTLAIEELIFELKKDFTILIVTHNMQQAARVSDYTAFMYMGDLIEYTDTDSLFTNPQVKRTEDYISGRYG.

Positions 26 to 267 (IVVKNWNLYY…PQVKRTEDYI (242 aa)) constitute an ABC transporter domain. ATP is bound at residue 58–65 (GPSGCGKS).

It belongs to the ABC transporter superfamily. Phosphate importer (TC 3.A.1.7) family. In terms of assembly, the complex is composed of two ATP-binding proteins (PstB), two transmembrane proteins (PstC and PstA) and a solute-binding protein (PstS).

It localises to the cell inner membrane. It carries out the reaction phosphate(out) + ATP + H2O = ADP + 2 phosphate(in) + H(+). In terms of biological role, part of the ABC transporter complex PstSACB involved in phosphate import. Responsible for energy coupling to the transport system. The polypeptide is Phosphate import ATP-binding protein PstB (Hydrogenovibrio crunogenus (strain DSM 25203 / XCL-2) (Thiomicrospira crunogena)).